The following is a 245-amino-acid chain: Outer dense fiber protein 1 (245 aa).

A phosphoserine mark is found at Ser5 and Ser10. Residues 34-38 form repeat 1; sequence RCLCD. The 2 X 5 AA repeats of [RC]-C-L-C-D stretch occupies residues 34–78; that stretch reads RCLCDLYMHPYCCCDLHPYPYCLCYSKRSRSCGLCDLYYPCCLCD. Ser64 carries the phosphoserine modification. Residues 74 to 78 form repeat 2; it reads CCLCD. 7 positions are modified to phosphoserine: Ser87, Ser108, Ser109, Ser137, Ser153, Ser175, and Ser180. The C-X-P repeat region stretch occupies residues 195–233; sequence CNPCNPCSPCSPCGPCGPCGPCGPCGPCGPCDPCNPCYP.

In terms of assembly, interacts (via leucine zipper motif) with TCP11. Interacts with SPAG4. Interacts with KLC3. Interacts with CCDC42. As to expression, testis. Specifically located to the round spermatid layer and to the luminally-oriented cytoplasm of elongated spermatids.

Its subcellular location is the cell projection. It is found in the cilium. The protein localises to the flagellum. The protein resides in the cytoplasm. It localises to the cytoskeleton. Its subcellular location is the microtubule organizing center. It is found in the centrosome. Component of the outer dense fibers (ODF) of spermatozoa. ODF are filamentous structures located on the outside of the axoneme in the midpiece and principal piece of the mammalian sperm tail and may help to maintain the passive elastic structures and elastic recoil of the sperm tail. In Rattus norvegicus (Rat), this protein is Outer dense fiber protein 1 (Odf1).